We begin with the raw amino-acid sequence, 255 residues long: Thiazole synthase (255 aa).

Residue lysine 96 is the Schiff-base intermediate with DXP of the active site. Residues glycine 157, 183-184, and 205-206 contribute to the 1-deoxy-D-xylulose 5-phosphate site; these read AG and NT.

Belongs to the ThiG family. In terms of assembly, homotetramer. Forms heterodimers with either ThiH or ThiS.

The protein localises to the cytoplasm. The enzyme catalyses [ThiS sulfur-carrier protein]-C-terminal-Gly-aminoethanethioate + 2-iminoacetate + 1-deoxy-D-xylulose 5-phosphate = [ThiS sulfur-carrier protein]-C-terminal Gly-Gly + 2-[(2R,5Z)-2-carboxy-4-methylthiazol-5(2H)-ylidene]ethyl phosphate + 2 H2O + H(+). The protein operates within cofactor biosynthesis; thiamine diphosphate biosynthesis. In terms of biological role, catalyzes the rearrangement of 1-deoxy-D-xylulose 5-phosphate (DXP) to produce the thiazole phosphate moiety of thiamine. Sulfur is provided by the thiocarboxylate moiety of the carrier protein ThiS. In vitro, sulfur can be provided by H(2)S. The chain is Thiazole synthase from Bacillus pumilus (strain SAFR-032).